A 73-amino-acid chain; its full sequence is Translation initiation factor IF-1 (73 aa).

Positions 1 to 72 (MSKDDLIQFT…TKGRVILRHQ (72 aa)) constitute an S1-like domain.

It belongs to the IF-1 family. In terms of assembly, component of the 30S ribosomal translation pre-initiation complex which assembles on the 30S ribosome in the order IF-2 and IF-3, IF-1 and N-formylmethionyl-tRNA(fMet); mRNA recruitment can occur at any time during PIC assembly.

Its subcellular location is the cytoplasm. Its function is as follows. One of the essential components for the initiation of protein synthesis. Stabilizes the binding of IF-2 and IF-3 on the 30S subunit to which N-formylmethionyl-tRNA(fMet) subsequently binds. Helps modulate mRNA selection, yielding the 30S pre-initiation complex (PIC). Upon addition of the 50S ribosomal subunit IF-1, IF-2 and IF-3 are released leaving the mature 70S translation initiation complex. The chain is Translation initiation factor IF-1 from Rickettsia bellii (strain OSU 85-389).